A 544-amino-acid chain; its full sequence is Chitin-inducible gibberellin-responsive protein 2 (544 aa).

Positions 1–123 (MADTPTSRMI…VGASCVTEDP (123 aa)) are disordered. Composition is skewed to polar residues over residues 15-30 (NIPS…SDNP), 63-74 (SQATPNKYTLDS), and 86-101 (PSSQ…PLSQ). The GRAS domain occupies 165–544 (RMMGIPRGNL…RPLVVSSAWH (380 aa)). Positions 172–232 (GNLKELLIAC…VARLASSGIS (61 aa)) are leucine repeat I (LRI). Positions 251–316 (MHFLYEACPY…GGPPTVRITG (66 aa)) are VHIID. Residues 282–286 (IHIID) carry the VHIID motif. A leucine repeat II (LRII) region spans residues 332–364 (LVGRRLSHIASLCKVPFEFHPLAISGSKVEAAH). The tract at residues 373 to 467 (LAVNFTLELH…QHCLAREIVN (95 aa)) is PFYRE. Positions 470–544 (ACEGEERAER…RPLVVSSAWH (75 aa)) are SAW.

This sequence belongs to the GRAS family.

It is found in the nucleus. Functionally, may play a regulatory role in the early step of oligosaccharide elicitor response, downstream of the membrane-associated high-affinity chitin-binding protein. This Oryza sativa subsp. japonica (Rice) protein is Chitin-inducible gibberellin-responsive protein 2 (CIGR2).